Here is a 286-residue protein sequence, read N- to C-terminus: Pantothenate synthetase (286 aa).

30 to 37 (MGNLHEGH) contacts ATP. H37 serves as the catalytic Proton donor. Q61 is a binding site for (R)-pantoate. Q61 is a beta-alanine binding site. Position 149–152 (149–152 (GRKD)) interacts with ATP. Residue Q155 participates in (R)-pantoate binding. ATP contacts are provided by residues V178 and 186–189 (MSSR).

It belongs to the pantothenate synthetase family. In terms of assembly, homodimer.

The protein resides in the cytoplasm. The catalysed reaction is (R)-pantoate + beta-alanine + ATP = (R)-pantothenate + AMP + diphosphate + H(+). The protein operates within cofactor biosynthesis; (R)-pantothenate biosynthesis; (R)-pantothenate from (R)-pantoate and beta-alanine: step 1/1. Functionally, catalyzes the condensation of pantoate with beta-alanine in an ATP-dependent reaction via a pantoyl-adenylate intermediate. In Alkalilimnicola ehrlichii (strain ATCC BAA-1101 / DSM 17681 / MLHE-1), this protein is Pantothenate synthetase.